Reading from the N-terminus, the 279-residue chain is Undecaprenyl-diphosphatase (279 aa).

Helical transmembrane passes span 2 to 22 (LFIE…TEWL), 44 to 64 (AFME…VIVI), 85 to 105 (WQLW…AVPL), 113 to 133 (FNHM…FLWI), 163 to 183 (VLSI…AIIL), 188 to 208 (TVAA…YSGL), 225 to 245 (LLVL…VIKL), and 255 to 275 (FTVF…YSVF).

Belongs to the UppP family.

It is found in the cell membrane. It carries out the reaction di-trans,octa-cis-undecaprenyl diphosphate + H2O = di-trans,octa-cis-undecaprenyl phosphate + phosphate + H(+). In terms of biological role, catalyzes the dephosphorylation of undecaprenyl diphosphate (UPP). Confers resistance to bacitracin. The chain is Undecaprenyl-diphosphatase from Streptococcus equi subsp. zooepidemicus (strain MGCS10565).